We begin with the raw amino-acid sequence, 559 residues long: Oxygen-dependent choline dehydrogenase (559 aa).

4–33 (DYIIIGAGSAGNVLAARLTEESDVSVLLLE) lines the FAD pocket. Residues 182–202 (EGFGPMDRTVTPKGRRASTAR) are disordered. His471 (proton acceptor) is an active-site residue.

Belongs to the GMC oxidoreductase family. Requires FAD as cofactor.

The enzyme catalyses choline + A = betaine aldehyde + AH2. It carries out the reaction betaine aldehyde + NAD(+) + H2O = glycine betaine + NADH + 2 H(+). The protein operates within amine and polyamine biosynthesis; betaine biosynthesis via choline pathway; betaine aldehyde from choline (cytochrome c reductase route): step 1/1. Its function is as follows. Involved in the biosynthesis of the osmoprotectant glycine betaine. Catalyzes the oxidation of choline to betaine aldehyde and betaine aldehyde to glycine betaine at the same rate. This chain is Oxygen-dependent choline dehydrogenase, found in Pectobacterium atrosepticum (strain SCRI 1043 / ATCC BAA-672) (Erwinia carotovora subsp. atroseptica).